A 371-amino-acid polypeptide reads, in one-letter code: Putative glutamate--cysteine ligase 2 (371 aa).

The protein belongs to the glutamate--cysteine ligase type 2 family. YbdK subfamily.

The catalysed reaction is L-cysteine + L-glutamate + ATP = gamma-L-glutamyl-L-cysteine + ADP + phosphate + H(+). Its function is as follows. ATP-dependent carboxylate-amine ligase which exhibits weak glutamate--cysteine ligase activity. The polypeptide is Putative glutamate--cysteine ligase 2 (Burkholderia mallei (strain NCTC 10247)).